The primary structure comprises 77 residues: Conotoxin PnMEKL-04 (77 aa).

The N-terminal stretch at 1–19 (MEKLTILLLVAAVLMSTQA) is a signal peptide. The propeptide occupies 20–45 (LPQGGGENRLKENIKFLLKRKTAADR). 3 cysteine pairs are disulfide-bonded: Cys-51-Cys-65, Cys-58-Cys-69, and Cys-64-Cys-73.

This sequence belongs to the conotoxin O2 superfamily. Expressed by the venom duct.

The protein localises to the secreted. The protein is Conotoxin PnMEKL-04 of Conus pennaceus (Feathered cone).